The primary structure comprises 461 residues: Argininosuccinate lyase (461 aa).

This sequence belongs to the lyase 1 family. Argininosuccinate lyase subfamily.

It is found in the cytoplasm. The enzyme catalyses 2-(N(omega)-L-arginino)succinate = fumarate + L-arginine. The protein operates within amino-acid biosynthesis; L-arginine biosynthesis; L-arginine from L-ornithine and carbamoyl phosphate: step 3/3. The polypeptide is Argininosuccinate lyase (Clostridium beijerinckii (strain ATCC 51743 / NCIMB 8052) (Clostridium acetobutylicum)).